Consider the following 147-residue polypeptide: Nucleoside diphosphate kinase (147 aa).

ATP is bound by residues K9, F57, R85, T91, R102, and N112. T91 carries the phosphothreonine modification. The Pros-phosphohistidine intermediate role is filled by H115. S122 carries the post-translational modification Phosphoserine.

This sequence belongs to the NDK family. As to quaternary structure, homotetramer. Mg(2+) serves as cofactor.

It is found in the cytoplasm. The catalysed reaction is a 2'-deoxyribonucleoside 5'-diphosphate + ATP = a 2'-deoxyribonucleoside 5'-triphosphate + ADP. The enzyme catalyses a ribonucleoside 5'-diphosphate + ATP = a ribonucleoside 5'-triphosphate + ADP. In terms of biological role, major role in the synthesis of nucleoside triphosphates other than ATP. The ATP gamma phosphate is transferred to the NDP beta phosphate via a ping-pong mechanism, using a phosphorylated active-site intermediate. This Halalkalibacterium halodurans (strain ATCC BAA-125 / DSM 18197 / FERM 7344 / JCM 9153 / C-125) (Bacillus halodurans) protein is Nucleoside diphosphate kinase.